We begin with the raw amino-acid sequence, 340 residues long: Guanine nucleotide-binding protein subunit beta-4 (340 aa).

Ser-2 is subject to N-acetylserine. Phosphoserine is present on Ser-2. WD repeat units follow at residues 53–92, 95–134, 141–179, 182–221, and 224–263; these read GHLAKIYAMHWGYDSRLLVSASQDGKLIIWDSYTTNKMHA, LRSSWVMTCAYAPSGNYVACGGLDNICSIYNLKTREGNVR, GHTGYLSCCRFLDDGQIITSSGDTTCALWDIETGQQTTT, GHSGDVMSLSLSPDLKTFVSGACDASSKLWDIRDGMCRQS, and GHISDINAVSFFPSGYAFATGSDDATCRLFDLRADQELLL. His-266 carries the phosphohistidine modification. 2 WD repeats span residues 268–307 and 310–339; these read NIICGITSVAFSKSGRLLLAGYDDFNCSVWDALKGGRAGV and GHDNRVSCLGVTDDGMAVATGSWDSFLRIW.

It belongs to the WD repeat G protein beta family. G proteins are composed of 3 units, alpha, beta and gamma. As to expression, widely expressed in the brain. Highest levels found in the hippocampus and layers v and vi of the neocortex.

In terms of biological role, guanine nucleotide-binding proteins (G proteins) are involved as a modulator or transducer in various transmembrane signaling systems. The beta and gamma chains are required for the GTPase activity, for replacement of GDP by GTP, and for G protein-effector interaction. The protein is Guanine nucleotide-binding protein subunit beta-4 (Gnb4) of Rattus norvegicus (Rat).